Consider the following 493-residue polypeptide: MAKIMIQGTASSVGKSLIVAALCRIFKQDGYSVCPFKSQNMSLNSYITLDGKEMGRAQVLQAYAAGLEPEVYMNPILLKPTSDKKSQIIVNGKVYGNSTAMEYHNLKIKFKGMLKEQFKKLEEDFDIVVMEGAGSPAEINLRDRDIVNMGMAEIVDAPVLLVGDIDKGGVFASLAGTMLLLNEGEKERVKGTIINKFRGDVEILNPGLDMLEDIIHIPCLGVVPYTRLQLEDEDGAVEFNKKAYAPIDIAVIKMPHISNFTDLDALKSEEDVSIRFITSKEEFKEPDLLVIPGSKNTIEDLLYLRKCGLEESIKEYSKDGKIIGICGGYQVLGSKIKDPYKVETDLGEIEGLNLLDMETTFEKEKITTRVSAKLINEEIENIVYGYEIHMGISEYSENVKPLFKIYDKNGEKVDYFDGAINEKGNVMGTYIHGVFDGIVFREKIINELRVKKGLKKKKSQVYEHMREKELDKLADIVRQSLDMEKIYSIIGMK.

A GATase cobBQ-type domain is found at 246–440; that stretch reads PIDIAVIKMP…IHGVFDGIVF (195 aa). The Nucleophile role is filled by Cys-326. His-432 is a catalytic residue.

The protein belongs to the CobB/CobQ family. CobQ subfamily.

It functions in the pathway cofactor biosynthesis; adenosylcobalamin biosynthesis. Its function is as follows. Catalyzes amidations at positions B, D, E, and G on adenosylcobyrinic A,C-diamide. NH(2) groups are provided by glutamine, and one molecule of ATP is hydrogenolyzed for each amidation. The polypeptide is Cobyric acid synthase (Clostridium botulinum (strain 657 / Type Ba4)).